A 533-amino-acid chain; its full sequence is Beta-1,4 N-acetylgalactosaminyltransferase 1 (533 aa).

Over 1–7 (MRLDRRA) the chain is Cytoplasmic. Residues 8–25 (LYALVLLLACASLGLLYS) form a helical; Signal-anchor for type II membrane protein membrane-spanning segment. Over 26-533 (STRNAPSLPN…KHRLQCMTAE (508 aa)) the chain is Lumenal. 3 N-linked (GlcNAc...) asparagine glycosylation sites follow: N79, N179, and N274. A disulfide bridge connects residues C429 and C476.

Belongs to the glycosyltransferase 2 family. Homodimer; disulfide-linked. In terms of tissue distribution, most abundant in brain, liver, lung, spleen and testis.

The protein resides in the golgi apparatus membrane. It catalyses the reaction a ganglioside GM3 (d18:1(4E)) + UDP-N-acetyl-alpha-D-galactosamine = a ganglioside GM2 (d18:1(4E)) + UDP + H(+). The catalysed reaction is a ganglioside GD3 (d18:1(4E)) + UDP-N-acetyl-alpha-D-galactosamine = a ganglioside GD2 (d18:1(4E)) + UDP + H(+). The enzyme catalyses a ganglioside GM3 + UDP-N-acetyl-alpha-D-galactosamine = a ganglioside GM2 + UDP + H(+). It carries out the reaction a ganglioside GD3 + UDP-N-acetyl-alpha-D-galactosamine = a ganglioside GD2 + UDP + H(+). It catalyses the reaction a ganglioside GD1a + UDP-N-acetyl-alpha-D-galactosamine = a ganglioside GalNAc-GD1a + UDP + H(+). The catalysed reaction is a ganglioside GT3 (d18:1(4E)) + UDP-N-acetyl-alpha-D-galactosamine = a ganglioside GT2 (d18:1(4E)) + UDP + H(+). The enzyme catalyses a beta-D-Gal-(1-&gt;4)-beta-D-Glc-(1&lt;-&gt;1)-Cer(d18:1(4E)) + UDP-N-acetyl-alpha-D-galactosamine = a ganglioside GA2 (d18:1(4E)) + UDP + H(+). It carries out the reaction a neolactoside IV(3)-alpha-NeuGc-nLc4Cer + UDP-N-acetyl-alpha-D-galactosamine = a neolactoside IV(4)-beta-GalNAc-IV(3)-alpha-NeuGc-nLc4Cer + UDP + H(+). It participates in sphingolipid metabolism. In terms of biological role, involved in the biosynthesis of gangliosides GM2, GD2 and GA2. Involved in the biosynthesis of gangliosides GM2, GD2, GT2 and GA2 from GM3, GD3, GT3 and GA3, respectively. This is Beta-1,4 N-acetylgalactosaminyltransferase 1 from Mus musculus (Mouse).